The chain runs to 270 residues: 3-phenylpropionate-dihydrodiol/cinnamic acid-dihydrodiol dehydrogenase (270 aa).

An NAD(+)-binding site is contributed by 10–34 (FITGGGSGLGLALVERFIEEGAQVA). S143 contacts substrate. Catalysis depends on Y156, which acts as the Proton acceptor.

This sequence belongs to the short-chain dehydrogenases/reductases (SDR) family.

It carries out the reaction 3-(cis-5,6-dihydroxycyclohexa-1,3-dien-1-yl)propanoate + NAD(+) = 3-(2,3-dihydroxyphenyl)propanoate + NADH + H(+). It catalyses the reaction (2E)-3-(cis-5,6-dihydroxycyclohexa-1,3-dien-1-yl)prop-2-enoate + NAD(+) = (2E)-3-(2,3-dihydroxyphenyl)prop-2-enoate + NADH + H(+). The protein operates within aromatic compound metabolism; 3-phenylpropanoate degradation. Functionally, converts 3-phenylpropionate-dihydrodiol (PP-dihydrodiol) and cinnamic acid-dihydrodiol (CI-dihydrodiol) into 3-(2,3-dihydroxylphenyl)propanoic acid (DHPP) and 2,3-dihydroxicinnamic acid (DHCI), respectively. The polypeptide is 3-phenylpropionate-dihydrodiol/cinnamic acid-dihydrodiol dehydrogenase (Shigella flexneri serotype 5b (strain 8401)).